Consider the following 381-residue polypeptide: 2-methylcitrate synthase 1 (381 aa).

His192 lines the substrate pocket. His227 is an active-site residue. 260–264 (RIMGF) provides a ligand contact to CoA. His266 is a catalytic residue. Arg275 contacts substrate. Asp317 is an active-site residue. 2 residues coordinate substrate: Arg342 and Arg361.

It belongs to the citrate synthase family. Homodimer.

It carries out the reaction propanoyl-CoA + oxaloacetate + H2O = (2S,3S)-2-methylcitrate + CoA + H(+). The enzyme catalyses oxaloacetate + acetyl-CoA + H2O = citrate + CoA + H(+). It functions in the pathway carbohydrate metabolism; tricarboxylic acid cycle. Functionally, catalyzes the Claisen condensation of propionyl-CoA and oxaloacetate (OAA) to yield 2-methylcitrate (2-MC) and CoA. Also catalyzes the condensation of oxaloacetate with propionyl-CoA but with a lower specificity. The protein is 2-methylcitrate synthase 1 (prpC1) of Corynebacterium glutamicum (strain ATCC 13032 / DSM 20300 / JCM 1318 / BCRC 11384 / CCUG 27702 / LMG 3730 / NBRC 12168 / NCIMB 10025 / NRRL B-2784 / 534).